The sequence spans 271 residues: Oligodendrocyte transcription factor 1 (271 aa).

The disordered stretch occupies residues tyrosine 38–arginine 117. Positions serine 43–threonine 61 are enriched in low complexity. Residues glutamine 105–leucine 164 enclose the bHLH domain.

As to expression, expressed in the brain, in oligodendrocytes. Strongly expressed in oligodendrogliomas, while expression is weak to moderate in astrocytomas. Expression in glioblastomas is highly variable.

Its subcellular location is the nucleus. Functionally, promotes formation and maturation of oligodendrocytes, especially within the brain. Cooperates with OLIG2 to establish the pMN domain of the embryonic neural tube. In Homo sapiens (Human), this protein is Oligodendrocyte transcription factor 1 (OLIG1).